The sequence spans 374 residues: 3-isopropylmalate dehydrogenase (374 aa).

83 to 96 serves as a coordination point for NAD(+); that stretch reads GPKWDNLPPEIRPE. Substrate is bound by residues arginine 104, arginine 114, arginine 142, and aspartate 231. 3 residues coordinate Mg(2+): aspartate 231, aspartate 255, and aspartate 259. 288-300 lines the NAD(+) pocket; sequence GSAPDIAGQNKAN.

The protein belongs to the isocitrate and isopropylmalate dehydrogenases family. LeuB type 1 subfamily. In terms of assembly, homodimer. Requires Mg(2+) as cofactor. It depends on Mn(2+) as a cofactor.

It localises to the cytoplasm. It catalyses the reaction (2R,3S)-3-isopropylmalate + NAD(+) = 4-methyl-2-oxopentanoate + CO2 + NADH. Its pathway is amino-acid biosynthesis; L-leucine biosynthesis; L-leucine from 3-methyl-2-oxobutanoate: step 3/4. Functionally, catalyzes the oxidation of 3-carboxy-2-hydroxy-4-methylpentanoate (3-isopropylmalate) to 3-carboxy-4-methyl-2-oxopentanoate. The product decarboxylates to 4-methyl-2 oxopentanoate. This is 3-isopropylmalate dehydrogenase from Carboxydothermus hydrogenoformans (strain ATCC BAA-161 / DSM 6008 / Z-2901).